We begin with the raw amino-acid sequence, 419 residues long: Serine hydroxymethyltransferase 1 (419 aa).

Residues leucine 121 and 125 to 127 (GHL) contribute to the (6S)-5,6,7,8-tetrahydrofolate site. At lysine 230 the chain carries N6-(pyridoxal phosphate)lysine. 356–358 (SPF) is a (6S)-5,6,7,8-tetrahydrofolate binding site.

The protein belongs to the SHMT family. In terms of assembly, homodimer. Pyridoxal 5'-phosphate serves as cofactor.

The protein resides in the cytoplasm. It carries out the reaction (6R)-5,10-methylene-5,6,7,8-tetrahydrofolate + glycine + H2O = (6S)-5,6,7,8-tetrahydrofolate + L-serine. It functions in the pathway one-carbon metabolism; tetrahydrofolate interconversion. The protein operates within amino-acid biosynthesis; glycine biosynthesis; glycine from L-serine: step 1/1. Catalyzes the reversible interconversion of serine and glycine with tetrahydrofolate (THF) serving as the one-carbon carrier. This reaction serves as the major source of one-carbon groups required for the biosynthesis of purines, thymidylate, methionine, and other important biomolecules. Also exhibits THF-independent aldolase activity toward beta-hydroxyamino acids, producing glycine and aldehydes, via a retro-aldol mechanism. This is Serine hydroxymethyltransferase 1 from Colwellia psychrerythraea (strain 34H / ATCC BAA-681) (Vibrio psychroerythus).